The sequence spans 271 residues: Mannosyl-3-phosphoglycerate phosphatase (271 aa).

Residue aspartate 13 is the Nucleophile of the active site. Positions 13, 15, and 214 each coordinate Mg(2+).

It belongs to the HAD-like hydrolase superfamily. MPGP family. It depends on Mg(2+) as a cofactor.

The protein resides in the cytoplasm. The enzyme catalyses 2-O-(alpha-D-mannosyl)-3-phosphoglycerate + H2O = (2R)-2-O-(alpha-D-mannosyl)-glycerate + phosphate. This Escherichia coli O157:H7 protein is Mannosyl-3-phosphoglycerate phosphatase (yedP).